Consider the following 318-residue polypeptide: Homoserine kinase (318 aa).

97-107 (PIGSGLGSSAC) is an ATP binding site.

Belongs to the GHMP kinase family. Homoserine kinase subfamily.

The protein resides in the cytoplasm. It carries out the reaction L-homoserine + ATP = O-phospho-L-homoserine + ADP + H(+). The protein operates within amino-acid biosynthesis; L-threonine biosynthesis; L-threonine from L-aspartate: step 4/5. Functionally, catalyzes the ATP-dependent phosphorylation of L-homoserine to L-homoserine phosphate. The chain is Homoserine kinase from Vibrio vulnificus (strain CMCP6).